The following is a 316-amino-acid chain: tRNA(Ile)-lysidine synthase (316 aa).

Position 33 to 38 (33 to 38 (SGGTDS)) interacts with ATP.

Belongs to the tRNA(Ile)-lysidine synthase family.

Its subcellular location is the cytoplasm. It carries out the reaction cytidine(34) in tRNA(Ile2) + L-lysine + ATP = lysidine(34) in tRNA(Ile2) + AMP + diphosphate + H(+). Functionally, ligates lysine onto the cytidine present at position 34 of the AUA codon-specific tRNA(Ile) that contains the anticodon CAU, in an ATP-dependent manner. Cytidine is converted to lysidine, thus changing the amino acid specificity of the tRNA from methionine to isoleucine. This Bdellovibrio bacteriovorus (strain ATCC 15356 / DSM 50701 / NCIMB 9529 / HD100) protein is tRNA(Ile)-lysidine synthase.